The chain runs to 388 residues: 2-epi-5-epi-valiolone synthase (388 aa).

Residues 92–95, 124–128, 148–149, Lys161, Lys170, and 188–191 each bind NAD(+); these read ERNK, GIVAD, TT, and LLAT. The Zn(2+) site is built by Glu203, His267, and His283.

This sequence belongs to the sugar phosphate cyclases superfamily. EEVS-like family. NAD(+) serves as cofactor. Requires Co(2+) as cofactor. The cofactor is Zn(2+).

It catalyses the reaction D-sedoheptulose 7-phosphate = 2-epi-5-epi-valiolone + phosphate. Catalyzes the cyclization of D-sedoheptulose 7-phosphate to 2-epi-5-epi-valiolone. Probably involved in acarbose biosynthesis. The protein is 2-epi-5-epi-valiolone synthase of Streptomyces glaucescens.